Here is a 388-residue protein sequence, read N- to C-terminus: Succinate--CoA ligase [ADP-forming] subunit beta (388 aa).

Positions 9–244 (KEILRKFGVA…LDEEDPAEIE (236 aa)) constitute an ATP-grasp domain. Residues Lys-46, 53–55 (GRG), Glu-99, Ala-102, and Glu-107 contribute to the ATP site. Residues Asn-199 and Asp-213 each coordinate Mg(2+). Substrate is bound by residues Asn-264 and 321-323 (GIM).

It belongs to the succinate/malate CoA ligase beta subunit family. In terms of assembly, heterotetramer of two alpha and two beta subunits. It depends on Mg(2+) as a cofactor.

The enzyme catalyses succinate + ATP + CoA = succinyl-CoA + ADP + phosphate. The catalysed reaction is GTP + succinate + CoA = succinyl-CoA + GDP + phosphate. The protein operates within carbohydrate metabolism; tricarboxylic acid cycle; succinate from succinyl-CoA (ligase route): step 1/1. Functionally, succinyl-CoA synthetase functions in the citric acid cycle (TCA), coupling the hydrolysis of succinyl-CoA to the synthesis of either ATP or GTP and thus represents the only step of substrate-level phosphorylation in the TCA. The beta subunit provides nucleotide specificity of the enzyme and binds the substrate succinate, while the binding sites for coenzyme A and phosphate are found in the alpha subunit. The polypeptide is Succinate--CoA ligase [ADP-forming] subunit beta (Burkholderia mallei (strain NCTC 10247)).